We begin with the raw amino-acid sequence, 327 residues long: Ubiquinone biosynthesis protein COQ4, mitochondrial (327 aa).

4 residues coordinate Zn(2+): His208, Asp209, His212, and Glu224.

It belongs to the COQ4 family. As to quaternary structure, component of a multi-subunit COQ enzyme complex, composed of at least COQ3, COQ4, COQ5, COQ6, COQ7 and COQ9. Zn(2+) serves as cofactor.

It is found in the mitochondrion inner membrane. It catalyses the reaction a 4-hydroxy-3-methoxy-5-(all-trans-polyprenyl)benzoate + H(+) = a 2-methoxy-6-(all-trans-polyprenyl)phenol + CO2. It participates in cofactor biosynthesis; ubiquinone biosynthesis. In terms of biological role, lyase that catalyzes the C1-decarboxylation of 4-hydroxy-3-methoxy-5-(all-trans-polyprenyl)benzoic acid into 2-methoxy-6-(all-trans-polyprenyl)phenol during ubiquinone biosynthesis. The sequence is that of Ubiquinone biosynthesis protein COQ4, mitochondrial from Lachancea thermotolerans (strain ATCC 56472 / CBS 6340 / NRRL Y-8284) (Yeast).